A 231-amino-acid polypeptide reads, in one-letter code: Sugar fermentation stimulation protein homolog (231 aa).

It belongs to the SfsA family.

In Pyrobaculum islandicum (strain DSM 4184 / JCM 9189 / GEO3), this protein is Sugar fermentation stimulation protein homolog.